The chain runs to 406 residues: Luteothin monooxygenase (406 aa).

Positions 98, 102, 296, 350, 353, and 355 each coordinate heme b.

Belongs to the cytochrome P450 family. Monomer. Requires heme b as cofactor.

It catalyses the reaction luteothin + 4 reduced [2Fe-2S]-[ferredoxin] + 2 O2 + 4 H(+) = aureothin + 4 oxidized [2Fe-2S]-[ferredoxin] + 3 H2O. Its pathway is antibiotic biosynthesis. It participates in polyketide biosynthesis. Functionally, bifunctional cytochrome P450 protein involved in the biosynthesis of the antibiotic aureothin, a nitroaryl polyketide metabolite with antifungal, cytotoxic and insecticidal activities. Catalyzes the hydroxylation of luteothin (also called deoxyaureothin), leading to the formation of the intermediate (7R)-7-hydroxydeoxyaureothin, followed by the formation of the aureothin tetrahydrofuran ring, the final step in the biosynthesis of aureothin. This is Luteothin monooxygenase from Streptomyces thioluteus.